The following is a 248-amino-acid chain: Adenosylcobinamide-GDP ribazoletransferase (248 aa).

A run of 8 helical transmembrane segments spans residues 3-23 (ELKALILSIQFMTGIPIPINI), 35-55 (SYFPVVGLLIGGILYIAYLLL), 63-83 (IVMTFLVAFSYILTRGMHIDG), 109-129 (LGTNGVLALVFMVILKILFLS), 135-155 (LLFSALLVSPVIARLSVVFSI), 180-199 (FVIALLISTIAGYFVMPLKD), 200-219 (LALLYVISLSFTCLISKYIS), and 228-248 (DTLGAVNEFVELIAFIYFSIL).

Belongs to the CobS family. Mg(2+) is required as a cofactor.

The protein resides in the cell membrane. It catalyses the reaction alpha-ribazole + adenosylcob(III)inamide-GDP = adenosylcob(III)alamin + GMP + H(+). It carries out the reaction alpha-ribazole 5'-phosphate + adenosylcob(III)inamide-GDP = adenosylcob(III)alamin 5'-phosphate + GMP + H(+). It functions in the pathway cofactor biosynthesis; adenosylcobalamin biosynthesis; adenosylcobalamin from cob(II)yrinate a,c-diamide: step 7/7. In terms of biological role, joins adenosylcobinamide-GDP and alpha-ribazole to generate adenosylcobalamin (Ado-cobalamin). Also synthesizes adenosylcobalamin 5'-phosphate from adenosylcobinamide-GDP and alpha-ribazole 5'-phosphate. This is Adenosylcobinamide-GDP ribazoletransferase from Caldanaerobacter subterraneus subsp. tengcongensis (strain DSM 15242 / JCM 11007 / NBRC 100824 / MB4) (Thermoanaerobacter tengcongensis).